A 304-amino-acid polypeptide reads, in one-letter code: ATP synthase gamma chain (304 aa).

It belongs to the ATPase gamma chain family. In terms of assembly, F-type ATPases have 2 components, CF(1) - the catalytic core - and CF(0) - the membrane proton channel. CF(1) has five subunits: alpha(3), beta(3), gamma(1), delta(1), epsilon(1). CF(0) has three main subunits: a, b and c.

The protein resides in the cell membrane. Its function is as follows. Produces ATP from ADP in the presence of a proton gradient across the membrane. The gamma chain is believed to be important in regulating ATPase activity and the flow of protons through the CF(0) complex. The polypeptide is ATP synthase gamma chain (Mycolicibacterium paratuberculosis (strain ATCC BAA-968 / K-10) (Mycobacterium paratuberculosis)).